Here is a 769-residue protein sequence, read N- to C-terminus: Zinc finger protein 585B (769 aa).

Over residues 1 to 12 the composition is skewed to polar residues; sequence MPASWTSPQKSS. Positions 1-23 are disordered; it reads MPASWTSPQKSSALAPDDHGSSY. A KRAB domain is found at 27 to 97; sequence VSFRDVVINF…QGERPRHSCP (71 aa). 21 C2H2-type zinc fingers span residues 158–180, 186–208, 214–236, 242–264, 270–292, 298–320, 354–376, 382–404, 410–432, 438–460, 466–488, 494–516, 522–544, 550–572, 578–600, 606–628, 634–656, 662–684, 690–712, 718–740, and 746–768; these read YVCIECGRAFVQKPEFITHQKAH, YKCNECGKSVFQVSSLFRHQRIH, YQCSECGKGFPYNSDLSIHEKIH, HECTDCGKAFTQRSTLKMHQKIH, YICIECGQAFIQKTQLIAHRRIH, YECNNCGKSFISKSQLEVHQRIH, SICTECGKAFTYRSELIIHQRIH, YACSDCGKAFTQKSTLTVHQRIH, YVCMKCGLAFIRKAHLVTHQIIH, YKCGHCGKLFTSKSQLHVHKRIH, YVCNKCGKAFTNRSDLITHQKTH, YICSKCGKAFTQRSDLITHQRIH, YECNTCGKAFTQKSNLNIHQKIH, YECHECGKAFNQKSILIVHQKIH, YVCTECGRAFIRKSNFITHQRIH, YECSDCGKSFTSKSQLLVHQPLH, YVCAECGKAFSGRSNLSKHQKTH, YICSECGKTFRQKSELITHHRIH, YECSDCGKSFTKKSQLQVHQRIH, YVCAECGKAFSNRSNLNKHQTTH, and YKCGICGKGFVQKSVFSVHQGSH.

This sequence belongs to the krueppel C2H2-type zinc-finger protein family.

Its subcellular location is the nucleus. May be involved in transcriptional regulation. The chain is Zinc finger protein 585B (ZNF585B) from Pongo abelii (Sumatran orangutan).